Here is a 135-residue protein sequence, read N- to C-terminus: C-type lectin BpLec (135 aa).

Cystine bridges form between Cys-3-Cys-14, Cys-31-Cys-131, Cys-38-Cys-133, and Cys-106-Cys-123. The C-type lectin domain occupies 10–132 (MNGLCYKIFD…CESKNAFLCQ (123 aa)). Gln-96, Asp-98, Glu-104, Asn-119, and Asp-120 together coordinate Ca(2+). The short motif at 96-98 (QPD) is the Galactose-binding element.

Belongs to the true venom lectin family. Homodimer; disulfide-linked. Expressed by the venom gland.

It localises to the secreted. Functionally, this lectin displays hemagglutinating activity on dog (128'000 HU/mg) and cat erythrocytes, that is inhibited by beta-galactosides (D-galactose, D-lactose, and N-acetyl-D-galactosamine) and EDTA. In addition, has been shown to hemagglutinate promastigote forms of Leishmania amazonensis. Also inhibits Gram-positive (S.aureus ATCC 25923) (MIC is 31.25 ug/ml) but not Gram-negative (E.coli ATCC 25922) bacteria. Is a calcium-dependent lectin. The protein is C-type lectin BpLec of Bothrops pauloensis (Neuwied's lancehead).